A 698-amino-acid chain; its full sequence is Probable Xaa-Pro aminopeptidase P (698 aa).

Mn(2+) contacts are provided by D509, D520, E604, and E618.

Belongs to the peptidase M24B family. Mn(2+) serves as cofactor.

It carries out the reaction Release of any N-terminal amino acid, including proline, that is linked to proline, even from a dipeptide or tripeptide.. Its function is as follows. Catalyzes the removal of a penultimate prolyl residue from the N-termini of peptides. The protein is Probable Xaa-Pro aminopeptidase P (AMPP) of Arthroderma benhamiae (strain ATCC MYA-4681 / CBS 112371) (Trichophyton mentagrophytes).